The chain runs to 352 residues: Putative [LysW]-L-2-aminoadipate/[LysW]-L-glutamate phosphate reductase (352 aa).

Residues 10–13 (SGFT) and 34–36 (SRR) contribute to the NADP(+) site. The active site involves C151. N319 is an NADP(+) binding site.

The protein belongs to the NAGSA dehydrogenase family. Type 1 subfamily. LysY sub-subfamily.

It localises to the cytoplasm. It catalyses the reaction [amino-group carrier protein]-C-terminal-N-(1-carboxy-5-oxopentan-1-yl)-L-glutamine + phosphate + NADP(+) = [amino-group carrier protein]-C-terminal-N-(1-carboxy-5-phosphooxy-5-oxopentan-1-yl)-L-glutamine + NADPH + H(+). The enzyme catalyses [amino-group carrier protein]-C-terminal-gamma-(L-glutamyl-5-semialdehyde)-L-glutamate + phosphate + NADP(+) = [amino-group carrier protein]-C-terminal-gamma-(5-phospho-L-glutamyl)-L-glutamate + NADPH + H(+). It participates in amino-acid biosynthesis; L-lysine biosynthesis via AAA pathway; L-lysine from L-alpha-aminoadipate (Thermus route): step 3/5. Its pathway is amino-acid biosynthesis; L-arginine biosynthesis. Involved in both the arginine and lysine biosynthetic pathways. In Pyrobaculum islandicum (strain DSM 4184 / JCM 9189 / GEO3), this protein is Putative [LysW]-L-2-aminoadipate/[LysW]-L-glutamate phosphate reductase.